Reading from the N-terminus, the 78-residue chain is Acyl carrier protein (78 aa).

One can recognise a Carrier domain in the interval 2–77; the sequence is SDIASRVKAI…QAISYIEEAK (76 aa). Serine 37 carries the O-(pantetheine 4'-phosphoryl)serine modification.

Belongs to the acyl carrier protein (ACP) family. Post-translationally, 4'-phosphopantetheine is transferred from CoA to a specific serine of apo-ACP by AcpS. This modification is essential for activity because fatty acids are bound in thioester linkage to the sulfhydryl of the prosthetic group.

It localises to the cytoplasm. Its pathway is lipid metabolism; fatty acid biosynthesis. Functionally, carrier of the growing fatty acid chain in fatty acid biosynthesis. This chain is Acyl carrier protein, found in Flavobacterium johnsoniae (strain ATCC 17061 / DSM 2064 / JCM 8514 / BCRC 14874 / CCUG 350202 / NBRC 14942 / NCIMB 11054 / UW101) (Cytophaga johnsonae).